The chain runs to 338 residues: UDP-3-O-acylglucosamine N-acyltransferase (338 aa).

His251 functions as the Proton acceptor in the catalytic mechanism.

It belongs to the transferase hexapeptide repeat family. LpxD subfamily. In terms of assembly, homotrimer.

The catalysed reaction is a UDP-3-O-[(3R)-3-hydroxyacyl]-alpha-D-glucosamine + a (3R)-hydroxyacyl-[ACP] = a UDP-2-N,3-O-bis[(3R)-3-hydroxyacyl]-alpha-D-glucosamine + holo-[ACP] + H(+). The protein operates within bacterial outer membrane biogenesis; LPS lipid A biosynthesis. Its function is as follows. Catalyzes the N-acylation of UDP-3-O-acylglucosamine using 3-hydroxyacyl-ACP as the acyl donor. Is involved in the biosynthesis of lipid A, a phosphorylated glycolipid that anchors the lipopolysaccharide to the outer membrane of the cell. In Psychrobacter cryohalolentis (strain ATCC BAA-1226 / DSM 17306 / VKM B-2378 / K5), this protein is UDP-3-O-acylglucosamine N-acyltransferase.